Consider the following 141-residue polypeptide: HTH-type transcriptional regulator LrpA (141 aa).

Residues 2–63 (VDERDKIILD…KINPKKLGYS (62 aa)) form the HTH asnC-type domain. A DNA-binding region (H-T-H motif) is located at residues 21–40 (FTEIAKILGISETAVRKRVK).

Homooctamer; tetramer of dimers.

In terms of biological role, DNA-binding protein that negatively regulates its own transcription. Interferes with RNA polymerase (RNAP) recruitment by inhibiting the association of RNAP with the TBP-TFB promoter complex. This chain is HTH-type transcriptional regulator LrpA (lrpA), found in Pyrococcus abyssi (strain GE5 / Orsay).